A 99-amino-acid polypeptide reads, in one-letter code: MALTLTDVKRIAHLARLELADAEAEHTLVQLNDFFGLVEQMQAVDTTGIAPLAHPIEQIEDVALRLRDDTVTETVEREAFQRPAPAVQDGLYLVPKVIE.

It belongs to the GatC family. As to quaternary structure, heterotrimer of A, B and C subunits.

It carries out the reaction L-glutamyl-tRNA(Gln) + L-glutamine + ATP + H2O = L-glutaminyl-tRNA(Gln) + L-glutamate + ADP + phosphate + H(+). It catalyses the reaction L-aspartyl-tRNA(Asn) + L-glutamine + ATP + H2O = L-asparaginyl-tRNA(Asn) + L-glutamate + ADP + phosphate + 2 H(+). Its function is as follows. Allows the formation of correctly charged Asn-tRNA(Asn) or Gln-tRNA(Gln) through the transamidation of misacylated Asp-tRNA(Asn) or Glu-tRNA(Gln) in organisms which lack either or both of asparaginyl-tRNA or glutaminyl-tRNA synthetases. The reaction takes place in the presence of glutamine and ATP through an activated phospho-Asp-tRNA(Asn) or phospho-Glu-tRNA(Gln). The polypeptide is Aspartyl/glutamyl-tRNA(Asn/Gln) amidotransferase subunit C (Paraburkholderia xenovorans (strain LB400)).